A 57-amino-acid chain; its full sequence is Phylloseptin-Az4 (57 aa).

Positions 1-13 (LVLFLGLVSLSIC) are cleaved as a signal peptide. Residues 14-35 (EEEKRETEEEENDQEEDDKSEE) constitute a propeptide that is removed on maturation. Positions 16 to 35 (EKRETEEEENDQEEDDKSEE) are disordered. Residues 21–32 (EEEENDQEEDDK) are compositionally biased toward acidic residues. At Leu56 the chain carries Leucine amide.

Expressed by the skin glands.

It localises to the secreted. Its function is as follows. Has antibacterial activity against the Gram-positive bacterium M.luteus ATCC 49732 (MIC=1.3 uM). Does not inhibit the growth of the fungus C.albicans. In Pithecopus azureus (Orange-legged monkey tree frog), this protein is Phylloseptin-Az4 (psn12).